The primary structure comprises 404 residues: Probable mannosyltransferase KTR3 (404 aa).

Over 1–27 the chain is Cytoplasmic; that stretch reads MSVHHKKKLMPKSALLIRKYQKGIRSS. A helical; Signal-anchor for type II membrane protein membrane pass occupies residues 28 to 44; it reads FIGLIIVLSFLFFMSGS. Positions 45 to 83 are stem region; the sequence is RSPEVPIAQGTSVSRVASKDYLMPFTDKSQGVIHPVDDG. At 45 to 404 the chain is on the lumenal side; that stretch reads RSPEVPIAQG…AGNYKLPPGI (360 aa). The tract at residues 84–404 is catalytic; it reads KKEKGVMVTL…AGNYKLPPGI (321 aa). Glutamate 295 acts as the Nucleophile in catalysis.

The protein belongs to the glycosyltransferase 15 family. As to quaternary structure, interacts with SVP26.

Its subcellular location is the membrane. In terms of biological role, possible glycosyltransferase that transfers an alpha-D-mannosyl residue from GDP-mannose into lipid-linked oligosaccharide, forming an alpha-(1-&gt;2)-D-mannosyl-D-mannose linkage. The protein is Probable mannosyltransferase KTR3 (KTR3) of Saccharomyces cerevisiae (strain ATCC 204508 / S288c) (Baker's yeast).